Reading from the N-terminus, the 744-residue chain is Palmitoyltransferase ZDHHC5-A (744 aa).

The span at 1–11 (MPSGSMSGGVS) shows a compositional bias: gly residues. A disordered region spans residues 1–25 (MPSGSMSGGVSGPTSPPHPTVPSRP). Residues 1 to 30 (MPSGSMSGGVSGPTSPPHPTVPSRPLRPSR) are Cytoplasmic-facing. The helical transmembrane segment at 31–51 (YVPVSAATAFLVGSTTLFFCF) threads the bilayer. Topologically, residues 52–61 (TCPWLSEQFS) are extracellular. Residues 62-82 (VAVPIYNGVMFMFVLANFCMA) traverse the membrane as a helical segment. Residues 83–167 (TFMDPGIFPR…IGRRNYRYFF (85 aa)) are Cytoplasmic-facing. In terms of domain architecture, DHHC spans 121 to 171 (KWCSTCRFYRPPRCSHCSVCDNCVEDFDHHCPWVNNCIGRRNYRYFFLFLL). Cysteine 151 functions as the S-palmitoyl cysteine intermediate in the catalytic mechanism. A helical transmembrane segment spans residues 168-188 (LFLLSLTAHIMGVFGFGLLFI). The Extracellular segment spans residues 189–208 (LYHTQQLDRVHSAVTMAVMC). The chain crosses the membrane as a helical span at residues 209–229 (VAGLFFIPVAGLTGFHVVLVA). Residues 230 to 744 (RGRTTNEQVT…VGGTTYEISV (515 aa)) are Cytoplasmic-facing. 3 disordered regions span residues 314 to 523 (SLEM…PVVG), 556 to 645 (QHAV…SLSY), and 664 to 744 (SVAG…EISV). Residues 369–393 (TYSSPGKNHTALTHAYANQSSQQPG) show a composition bias toward polar residues. Residues 398–413 (PSLDGREGGGAERSGA) are compositionally biased toward basic and acidic residues. Positions 415–428 (RTGGGPGGPPGSGI) are enriched in gly residues. Polar residues predominate over residues 460-501 (THNAPPSEATTSTSYKSLANQTPPQAARNGSLSYDSLLTPSE). A compositionally biased stretch (basic and acidic residues) spans 571–584 (PERERERLLHDSQA). Residues 585–601 (QHHHHHHHHHHHHRPPR) are compositionally biased toward basic residues. 2 stretches are compositionally biased toward low complexity: residues 621-630 (RTRSTDTTHP) and 689-723 (PKPS…SPAH). Positions 725–737 (PGGGVKKVTGVGG) are enriched in gly residues.

It belongs to the DHHC palmitoyltransferase family. ERF2/ZDHHC9 subfamily.

The protein localises to the cell membrane. It carries out the reaction L-cysteinyl-[protein] + hexadecanoyl-CoA = S-hexadecanoyl-L-cysteinyl-[protein] + CoA. Functionally, palmitoyltransferase that catalyzes the addition of palmitate onto various protein substrates and is involved in a variety of cellular processes. The protein is Palmitoyltransferase ZDHHC5-A of Danio rerio (Zebrafish).